The following is a 171-amino-acid chain: uncharacterized protein (171 aa).

Residues 33–166 (AISIATNLYR…LTGLLRKVAD (134 aa)) enclose the HTH marR-type domain. Positions 80–103 (TRKIAELSGISTATASNVIKTLEK) form a DNA-binding region, H-T-H motif.

This is an uncharacterized protein from Bacillus subtilis (strain 168).